Here is a 123-residue protein sequence, read N- to C-terminus: Small ribosomal subunit protein uS12 (123 aa).

Asp89 is modified (3-methylthioaspartic acid).

This sequence belongs to the universal ribosomal protein uS12 family. In terms of assembly, part of the 30S ribosomal subunit. Contacts proteins S8 and S17. May interact with IF1 in the 30S initiation complex.

In terms of biological role, with S4 and S5 plays an important role in translational accuracy. Functionally, interacts with and stabilizes bases of the 16S rRNA that are involved in tRNA selection in the A site and with the mRNA backbone. Located at the interface of the 30S and 50S subunits, it traverses the body of the 30S subunit contacting proteins on the other side and probably holding the rRNA structure together. The combined cluster of proteins S8, S12 and S17 appears to hold together the shoulder and platform of the 30S subunit. This Mesorhizobium japonicum (strain LMG 29417 / CECT 9101 / MAFF 303099) (Mesorhizobium loti (strain MAFF 303099)) protein is Small ribosomal subunit protein uS12.